Here is a 336-residue protein sequence, read N- to C-terminus: UPF0284 protein Pcal_1534 (336 aa).

It belongs to the UPF0284 family.

The protein is UPF0284 protein Pcal_1534 of Pyrobaculum calidifontis (strain DSM 21063 / JCM 11548 / VA1).